The following is a 500-amino-acid chain: 2-isopropylmalate synthase (500 aa).

The 262-residue stretch at 5-266 (LFIFDTTLRD…ITNITTNKIY (262 aa)) folds into the Pyruvate carboxyltransferase domain. Residues aspartate 14, histidine 202, histidine 204, and asparagine 238 each contribute to the Mn(2+) site. The segment at 389–500 (KLEYLQVTSG…VDAINKFIVD (112 aa)) is regulatory domain.

This sequence belongs to the alpha-IPM synthase/homocitrate synthase family. LeuA type 1 subfamily. In terms of assembly, homodimer. Mn(2+) is required as a cofactor.

The protein resides in the cytoplasm. The enzyme catalyses 3-methyl-2-oxobutanoate + acetyl-CoA + H2O = (2S)-2-isopropylmalate + CoA + H(+). It participates in amino-acid biosynthesis; L-leucine biosynthesis; L-leucine from 3-methyl-2-oxobutanoate: step 1/4. Catalyzes the condensation of the acetyl group of acetyl-CoA with 3-methyl-2-oxobutanoate (2-ketoisovalerate) to form 3-carboxy-3-hydroxy-4-methylpentanoate (2-isopropylmalate). In Parabacteroides distasonis (strain ATCC 8503 / DSM 20701 / CIP 104284 / JCM 5825 / NCTC 11152), this protein is 2-isopropylmalate synthase.